The chain runs to 3476 residues: Abnormal spindle-like microcephaly-associated protein homolog (3476 aa).

Residues methionine 1 to glutamate 30 form a disordered region. 5 positions are modified to phosphoserine: serine 280, serine 283, serine 367, serine 392, and serine 425. 2 disordered regions span residues serine 416–glycine 443 and alanine 562–glutamate 581. Serine 604 carries the post-translational modification Phosphoserine. In terms of domain architecture, Calponin-homology (CH) 1 spans lysine 919–glutamine 1055. Residues valine 1056–serine 1077 are a coiled coil. Serine 1102 carries the phosphoserine modification. The Calponin-homology (CH) 2 domain occupies serine 1109 to leucine 1260. IQ domains are found at residues glutamine 1346–glutamine 1377, tyrosine 1392–serine 1421, leucine 1581–glutamine 1612, methionine 1604–serine 1633, threonine 1631–lysine 1660, isoleucine 1654–lysine 1683, methionine 1727–serine 1756, glutamine 1750–glutamine 1781, valine 1800–lysine 1829, glutamine 1823–lysine 1852, threonine 1873–lysine 1902, glutamate 1896–glutamine 1927, leucine 1946–glutamine 1977, glutamine 1969–glutamine 2000, threonine 2019–threonine 2048, cysteine 2042–glutamine 2073, leucine 2092–lysine 2123, methionine 2115–glutamine 2146, isoleucine 2165–glutamine 2196, leucine 2238–glutamine 2269, methionine 2261–glutamine 2292, valine 2310–glutamine 2341, methionine 2333–glutamine 2364, glutamine 2383–glutamine 2414, methionine 2406–glutamine 2437, leucine 2456–glutamine 2487, methionine 2479–glutamine 2510, glutamine 2529–glutamine 2560, glutamine 2623–serine 2652, arginine 2664–glutamine 2695, methionine 2687–glutamine 2718, valine 2737–alanine 2766, glutamine 2858–glutamine 2889, isoleucine 2908–lysine 2937, isoleucine 2931–alanine 2962, lysine 2953–glutamine 2984, arginine 3028–glutamine 3059, phenylalanine 3078–histidine 3109, arginine 3180–lysine 3209, and phenylalanine 3203–serine 3234.

It is found in the cytoplasm. It localises to the cytoskeleton. The protein localises to the spindle. The protein resides in the nucleus. Functionally, probable role in mitotic spindle regulation and coordination of mitotic processes. May have a preferential role in regulating neurogenesis. In Gorilla gorilla gorilla (Western lowland gorilla), this protein is Abnormal spindle-like microcephaly-associated protein homolog (ASPM).